We begin with the raw amino-acid sequence, 599 residues long: CAP-Gly domain-containing linker protein 4 (599 aa).

ANK repeat units lie at residues Thr-65–Asp-101, Thr-149–Ala-180, and Asn-186–Phe-215. The region spanning Gly-303–Pro-345 is the CAP-Gly 1 domain. Residues Ser-387–Glu-482 form a disordered region. Residues Leu-443–Ser-462 are compositionally biased toward low complexity. A compositionally biased stretch (polar residues) spans Leu-468–Asn-478. Positions Gly-505–Pro-547 constitute a CAP-Gly 2 domain. A Phosphoserine modification is found at Ser-557. Residues Ser-565–Lys-599 are disordered. Residues Phe-576 to Ser-587 show a composition bias toward low complexity.

The sequence is that of CAP-Gly domain-containing linker protein 4 (Clip4) from Rattus norvegicus (Rat).